We begin with the raw amino-acid sequence, 169 residues long: Translocator protein (169 aa).

Topologically, residues 2–5 (APPW) are mitochondrial intermembrane. A helical membrane pass occupies residues 6-26 (VPAMGFTLAPSLGCFVGSRFV). The Cytoplasmic segment spans residues 27 to 46 (HGEGLRWYAGLQKPSWHPPH). Residues 47-67 (WVLGPVWGTLYSAMGYGSYLV) form a helical membrane-spanning segment. The Mitochondrial intermembrane portion of the chain corresponds to 68–79 (WKELGGFTEKAV). A helical transmembrane segment spans residues 80–100 (VPLGLYTGQLALNWAWPPIFF). Residues 101 to 105 (GARQM) lie on the Cytoplasmic side of the membrane. A helical membrane pass occupies residues 106–126 (GWALVDLLLVSGAAAATTVAW). Residues 127 to 134 (YQVSPLAA) are Mitochondrial intermembrane-facing. Residues 135–155 (RLLYPYLAWLAFTTTLNYCVW) form a helical membrane-spanning segment. Over 156–169 (RDNHGWRGGRRLPE) the chain is Cytoplasmic.

It belongs to the TspO/BZRP family. Interacts with TSPOAP1. May interact with STAR. Interacts with MOST-1. Interacts with TMEM97. Forms a complex with TMEM97 and PGRMC1; the interaction occurs in MIA PaCa-2 cells but not in MCF7 cells. As to expression, found in many tissue types. Expressed at the highest levels under normal conditions in tissues that synthesize steroids.

The protein localises to the mitochondrion membrane. Functionally, can bind protoporphyrin IX and may play a role in the transport of porphyrins and heme. Promotes the transport of cholesterol across mitochondrial membranes and may play a role in lipid metabolism, but its precise physiological role is controversial. It is apparently not required for steroid hormone biosynthesis. Was initially identified as peripheral-type benzodiazepine receptor; can also bind isoquinoline carboxamides. The polypeptide is Translocator protein (TSPO) (Homo sapiens (Human)).